Reading from the N-terminus, the 248-residue chain is Ribosomal RNA small subunit methyltransferase J (248 aa).

Residues 97-98, 113-114, and D167 contribute to the S-adenosyl-L-methionine site; these read RD and ER.

This sequence belongs to the methyltransferase superfamily. RsmJ family.

It is found in the cytoplasm. The catalysed reaction is guanosine(1516) in 16S rRNA + S-adenosyl-L-methionine = N(2)-methylguanosine(1516) in 16S rRNA + S-adenosyl-L-homocysteine + H(+). Specifically methylates the guanosine in position 1516 of 16S rRNA. This is Ribosomal RNA small subunit methyltransferase J from Aeromonas hydrophila subsp. hydrophila (strain ATCC 7966 / DSM 30187 / BCRC 13018 / CCUG 14551 / JCM 1027 / KCTC 2358 / NCIMB 9240 / NCTC 8049).